The primary structure comprises 262 residues: Adenosylcobinamide-GDP ribazoletransferase (262 aa).

8 helical membrane passes run 4-21 (AWSGFLLSVQFLTVIPIR), 37-57 (AFPLVGALIGVIEAVTYFIFS), 62-82 (LSPLFLALSLMWLSIWIAGGL), 112-132 (VGAFAVLSILCLLSFRFLFVF), 141-161 (IFLISVIPLLSRTAMAWLLIY), 181-201 (YDAHVAMIIGNCLLACLCAIH), 202-222 (FSVWKTVIFLACGTIFAVFVA), and 236-256 (DALGAFVEGVETWLWCMIWLL).

It belongs to the CobS family. The cofactor is Mg(2+).

It localises to the cell membrane. It catalyses the reaction alpha-ribazole + adenosylcob(III)inamide-GDP = adenosylcob(III)alamin + GMP + H(+). It carries out the reaction alpha-ribazole 5'-phosphate + adenosylcob(III)inamide-GDP = adenosylcob(III)alamin 5'-phosphate + GMP + H(+). The protein operates within cofactor biosynthesis; adenosylcobalamin biosynthesis; adenosylcobalamin from cob(II)yrinate a,c-diamide: step 7/7. Functionally, joins adenosylcobinamide-GDP and alpha-ribazole to generate adenosylcobalamin (Ado-cobalamin). Also synthesizes adenosylcobalamin 5'-phosphate from adenosylcobinamide-GDP and alpha-ribazole 5'-phosphate. This is Adenosylcobinamide-GDP ribazoletransferase from Geobacillus sp. (strain WCH70).